We begin with the raw amino-acid sequence, 341 residues long: Glycerol-3-phosphate dehydrogenase [NAD(P)+] (341 aa).

NADPH contacts are provided by Ser-14, Phe-15, Arg-35, and Lys-108. Residues Lys-108 and Gly-136 each coordinate sn-glycerol 3-phosphate. Ala-140 contacts NADPH. The sn-glycerol 3-phosphate site is built by Lys-191, Asp-244, Ser-254, Arg-255, and Asn-256. Lys-191 functions as the Proton acceptor in the catalytic mechanism. Arg-255 lines the NADPH pocket. NADPH contacts are provided by Val-279 and Glu-281.

This sequence belongs to the NAD-dependent glycerol-3-phosphate dehydrogenase family.

The protein resides in the cytoplasm. It carries out the reaction sn-glycerol 3-phosphate + NAD(+) = dihydroxyacetone phosphate + NADH + H(+). The enzyme catalyses sn-glycerol 3-phosphate + NADP(+) = dihydroxyacetone phosphate + NADPH + H(+). Its pathway is membrane lipid metabolism; glycerophospholipid metabolism. Its function is as follows. Catalyzes the reduction of the glycolytic intermediate dihydroxyacetone phosphate (DHAP) to sn-glycerol 3-phosphate (G3P), the key precursor for phospholipid synthesis. This Pseudomonas putida (strain ATCC 47054 / DSM 6125 / CFBP 8728 / NCIMB 11950 / KT2440) protein is Glycerol-3-phosphate dehydrogenase [NAD(P)+].